The following is a 301-amino-acid chain: 33 kDa chaperonin (301 aa).

2 disulfide bridges follow: cysteine 239–cysteine 241 and cysteine 272–cysteine 275.

It belongs to the HSP33 family. Post-translationally, under oxidizing conditions two disulfide bonds are formed involving the reactive cysteines. Under reducing conditions zinc is bound to the reactive cysteines and the protein is inactive.

The protein resides in the cytoplasm. Functionally, redox regulated molecular chaperone. Protects both thermally unfolding and oxidatively damaged proteins from irreversible aggregation. Plays an important role in the bacterial defense system toward oxidative stress. The chain is 33 kDa chaperonin from Nostoc sp. (strain PCC 7120 / SAG 25.82 / UTEX 2576).